The primary structure comprises 164 residues: MSRAIYPGSFDPITNGHLDIIDRASKVFDELIVGVLVNPDKKGLFTVEERVELIERVVKDIPNVKVESFSGLLIDFMKKKQSQVIVKGLRAVSDFEYECQMSLMNKKLDPNIDTVFMMASAMNSFLSSSSVKQVAMFGGCIEGLVPEEVIIDIIKKFDKAYKNC.

Position 9 (S9) interacts with substrate. ATP-binding positions include 9–10 (SF) and H17. Residues K41, L73, and K87 each coordinate substrate. Residues 88 to 90 (GLR), E98, and 123 to 129 (NSFLSSS) contribute to the ATP site.

This sequence belongs to the bacterial CoaD family. In terms of assembly, homohexamer. Mg(2+) serves as cofactor.

It localises to the cytoplasm. It catalyses the reaction (R)-4'-phosphopantetheine + ATP + H(+) = 3'-dephospho-CoA + diphosphate. It participates in cofactor biosynthesis; coenzyme A biosynthesis; CoA from (R)-pantothenate: step 4/5. In terms of biological role, reversibly transfers an adenylyl group from ATP to 4'-phosphopantetheine, yielding dephospho-CoA (dPCoA) and pyrophosphate. This is Phosphopantetheine adenylyltransferase from Clostridium kluyveri (strain ATCC 8527 / DSM 555 / NBRC 12016 / NCIMB 10680 / K1).